Consider the following 228-residue polypeptide: DNA mismatch repair protein MutH (228 aa).

The protein belongs to the MutH family.

Its subcellular location is the cytoplasm. In terms of biological role, sequence-specific endonuclease that cleaves unmethylated GATC sequences. It is involved in DNA mismatch repair. This Photorhabdus laumondii subsp. laumondii (strain DSM 15139 / CIP 105565 / TT01) (Photorhabdus luminescens subsp. laumondii) protein is DNA mismatch repair protein MutH.